A 630-amino-acid polypeptide reads, in one-letter code: 1,4-alpha-glucan branching enzyme GlgB (630 aa).

Catalysis depends on Asp311, which acts as the Nucleophile. Glu362 acts as the Proton donor in catalysis.

The protein belongs to the glycosyl hydrolase 13 family. GlgB subfamily. As to quaternary structure, monomer.

The enzyme catalyses Transfers a segment of a (1-&gt;4)-alpha-D-glucan chain to a primary hydroxy group in a similar glucan chain.. It participates in glycan biosynthesis; glycogen biosynthesis. Its function is as follows. Catalyzes the formation of the alpha-1,6-glucosidic linkages in glycogen by scission of a 1,4-alpha-linked oligosaccharide from growing alpha-1,4-glucan chains and the subsequent attachment of the oligosaccharide to the alpha-1,6 position. The sequence is that of 1,4-alpha-glucan branching enzyme GlgB from Aquifex aeolicus (strain VF5).